Here is a 248-residue protein sequence, read N- to C-terminus: Probable phosphatase VCM66_A0854 (248 aa).

Zn(2+) is bound by residues His-8, His-10, His-16, His-41, Glu-74, His-102, His-132, Asp-194, and His-196.

The protein belongs to the PHP family. Zn(2+) serves as cofactor.

This Vibrio cholerae serotype O1 (strain M66-2) protein is Probable phosphatase VCM66_A0854.